The primary structure comprises 214 residues: Pyrrolidone-carboxylate peptidase (214 aa).

Active-site residues include Glu80, Cys143, and His166.

Belongs to the peptidase C15 family. As to quaternary structure, homotetramer.

Its subcellular location is the cytoplasm. The catalysed reaction is Release of an N-terminal pyroglutamyl group from a polypeptide, the second amino acid generally not being Pro.. Removes 5-oxoproline from various penultimate amino acid residues except L-proline. This chain is Pyrrolidone-carboxylate peptidase, found in Enterobacter sp. (strain 638).